A 290-amino-acid chain; its full sequence is Purine nucleoside phosphorylase (290 aa).

68-69 (RN) is a binding site for phosphate. Met-204 is a substrate binding site. Residue Thr-205 coordinates phosphate.

The protein belongs to the PNP/MTAP phosphorylase family. MTAP subfamily. As to quaternary structure, homotrimer.

It is found in the cytoplasm. It localises to the nucleus. It catalyses the reaction a purine D-ribonucleoside + phosphate = a purine nucleobase + alpha-D-ribose 1-phosphate. The protein operates within purine metabolism; purine nucleoside salvage. Functionally, purine nucleoside phosphorylase involved in purine salvage. This chain is Purine nucleoside phosphorylase, found in Drosophila melanogaster (Fruit fly).